Here is a 602-residue protein sequence, read N- to C-terminus: Elongation factor 4 (602 aa).

The region spanning 7–189 (KYIRNFSIVA…AIVSKVPAPY (183 aa)) is the tr-type G domain. Residues 19-24 (DHGKST) and 136-139 (NKID) each bind GTP.

The protein belongs to the TRAFAC class translation factor GTPase superfamily. Classic translation factor GTPase family. LepA subfamily.

It is found in the cell membrane. It carries out the reaction GTP + H2O = GDP + phosphate + H(+). Its function is as follows. Required for accurate and efficient protein synthesis under certain stress conditions. May act as a fidelity factor of the translation reaction, by catalyzing a one-codon backward translocation of tRNAs on improperly translocated ribosomes. Back-translocation proceeds from a post-translocation (POST) complex to a pre-translocation (PRE) complex, thus giving elongation factor G a second chance to translocate the tRNAs correctly. Binds to ribosomes in a GTP-dependent manner. In Clostridium botulinum (strain Loch Maree / Type A3), this protein is Elongation factor 4.